The following is a 262-amino-acid chain: Acyl-[acyl-carrier-protein]--UDP-N-acetylglucosamine O-acyltransferase (262 aa).

Belongs to the transferase hexapeptide repeat family. LpxA subfamily. Homotrimer.

It is found in the cytoplasm. It carries out the reaction a (3R)-hydroxyacyl-[ACP] + UDP-N-acetyl-alpha-D-glucosamine = a UDP-3-O-[(3R)-3-hydroxyacyl]-N-acetyl-alpha-D-glucosamine + holo-[ACP]. It functions in the pathway glycolipid biosynthesis; lipid IV(A) biosynthesis; lipid IV(A) from (3R)-3-hydroxytetradecanoyl-[acyl-carrier-protein] and UDP-N-acetyl-alpha-D-glucosamine: step 1/6. In terms of biological role, involved in the biosynthesis of lipid A, a phosphorylated glycolipid that anchors the lipopolysaccharide to the outer membrane of the cell. The protein is Acyl-[acyl-carrier-protein]--UDP-N-acetylglucosamine O-acyltransferase of Paraburkholderia phymatum (strain DSM 17167 / CIP 108236 / LMG 21445 / STM815) (Burkholderia phymatum).